Consider the following 119-residue polypeptide: Large ribosomal subunit protein bL20 (119 aa).

This sequence belongs to the bacterial ribosomal protein bL20 family.

In terms of biological role, binds directly to 23S ribosomal RNA and is necessary for the in vitro assembly process of the 50S ribosomal subunit. It is not involved in the protein synthesizing functions of that subunit. This is Large ribosomal subunit protein bL20 from Rhodopseudomonas palustris (strain BisB5).